We begin with the raw amino-acid sequence, 122 residues long: NADH-quinone oxidoreductase subunit A (122 aa).

Helical transmembrane passes span 10 to 30 (MIVL…LTLG), 66 to 86 (IFAL…PWAV), and 91 to 111 (LGLF…VGLA).

Belongs to the complex I subunit 3 family. In terms of assembly, NDH-1 is composed of 14 different subunits. Subunits NuoA, H, J, K, L, M, N constitute the membrane sector of the complex.

It localises to the cell membrane. The catalysed reaction is a quinone + NADH + 5 H(+)(in) = a quinol + NAD(+) + 4 H(+)(out). Its function is as follows. NDH-1 shuttles electrons from NADH, via FMN and iron-sulfur (Fe-S) centers, to quinones in the respiratory chain. The immediate electron acceptor for the enzyme in this species is believed to be a menaquinone. Couples the redox reaction to proton translocation (for every two electrons transferred, four hydrogen ions are translocated across the cytoplasmic membrane), and thus conserves the redox energy in a proton gradient. This is NADH-quinone oxidoreductase subunit A from Bacillus cereus (strain ATCC 14579 / DSM 31 / CCUG 7414 / JCM 2152 / NBRC 15305 / NCIMB 9373 / NCTC 2599 / NRRL B-3711).